Consider the following 89-residue polypeptide: Protein RALF-like 5 (89 aa).

The first 25 residues, 1-25 (MLKAQVFMFVTVLVFVCVFINSNDA), serve as a signal peptide directing secretion. 2 disulfides stabilise this stretch: cysteine 39–cysteine 48 and cysteine 61–cysteine 67.

It belongs to the plant rapid alkalinization factor (RALF) family.

Its subcellular location is the secreted. Its function is as follows. Cell signaling peptide that may regulate plant stress, growth, and development. Mediates a rapid alkalinization of extracellular space by mediating a transient increase in the cytoplasmic Ca(2+) concentration leading to a calcium-dependent signaling events through a cell surface receptor and a concomitant activation of some intracellular mitogen-activated protein kinases. The protein is Protein RALF-like 5 (RALFL5) of Arabidopsis thaliana (Mouse-ear cress).